Consider the following 377-residue polypeptide: Transmembrane 6 superfamily member 2 (377 aa).

Transmembrane regions (helical) follow at residues 10 to 30 (IAAL…VSAL), 34 to 54 (LWVA…VYSL), 63 to 83 (PLYA…IIAL), 111 to 131 (FICY…AGAI), 140 to 160 (FGLY…TGNI), 170 to 190 (PAFF…MKVF), 219 to 239 (LALV…GLVV), 269 to 289 (MLMY…ALTF), and 332 to 352 (TWGC…LLAY). EXPERA domains are found at residues 61-186 (YDPL…CWAG) and 217-351 (ADLA…HLLA).

Belongs to the TM6SF family. In terms of tissue distribution, substantial expression in liver and intestine, whereas all other tissues analyzed show low levels.

It is found in the endoplasmic reticulum membrane. The protein localises to the endoplasmic reticulum-Golgi intermediate compartment membrane. Functionally, regulator of liver fat metabolism influencing triglyceride secretion and hepatic lipid droplet content. May function as sterol isomerase. The protein is Transmembrane 6 superfamily member 2 (TM6SF2) of Homo sapiens (Human).